A 320-amino-acid chain; its full sequence is Ferrochelatase (320 aa).

The Fe cation site is built by His194 and Glu275.

It belongs to the ferrochelatase family. As to quaternary structure, monomer.

It is found in the cytoplasm. It carries out the reaction heme b + 2 H(+) = protoporphyrin IX + Fe(2+). It participates in porphyrin-containing compound metabolism; protoheme biosynthesis; protoheme from protoporphyrin-IX: step 1/1. Catalyzes the ferrous insertion into protoporphyrin IX. The sequence is that of Ferrochelatase from Shigella boydii serotype 4 (strain Sb227).